We begin with the raw amino-acid sequence, 302 residues long: Recombination-associated protein RdgC (302 aa).

The protein belongs to the RdgC family.

Its subcellular location is the cytoplasm. It is found in the nucleoid. May be involved in recombination. The protein is Recombination-associated protein RdgC of Actinobacillus pleuropneumoniae serotype 7 (strain AP76).